Here is a 418-residue protein sequence, read N- to C-terminus: MSGLLKKKQRFSCNDILKIVSKYGTPLWVYDSNIIVKKIKELSQFDVIRFAQKSCSNIHILNLFYKYNVKIDAVSLGEIERALISKYRFTMDQDVVFTSDIIERETLNKVVQYKIPINIGSIDMLEQVGKISPGHNIWLRINPKFGHGHSKKTNTGGENSKHGIWDINLAFPYITKYNFKLIGLHMHIGSGVDYCHLKRVCKAMIDQVLQCKFKIHVISAGGGLTVPYHCNDEPVNVKNYFFLWNKARKIISNYLNRPIRLEIEPGRFLVAESGILVSEIRVIKKTNNRTFILVDSGFNDLIRPAMYGSYHHISVIPRDGRCVNYDDTIEAVVCGPLCESGDVFTQNEYGDIKTRILPNVQIGDFLVFHDTGAYGASMSSNYNSRPLIPEILFKDNEFHIIRRRQTMKELLELEINCI.

K53 carries the post-translational modification N6-(pyridoxal phosphate)lysine. Residues G223 and 264-267 contribute to the pyridoxal 5'-phosphate site; that span reads EPGR. Substrate is bound by residues R267, R303, and Y307. C338 acts as the Proton donor in catalysis. Substrate is bound by residues E339 and Y374. Y374 contacts pyridoxal 5'-phosphate.

The protein belongs to the Orn/Lys/Arg decarboxylase class-II family. LysA subfamily. In terms of assembly, homodimer. Pyridoxal 5'-phosphate serves as cofactor.

The catalysed reaction is meso-2,6-diaminopimelate + H(+) = L-lysine + CO2. It functions in the pathway amino-acid biosynthesis; L-lysine biosynthesis via DAP pathway; L-lysine from DL-2,6-diaminopimelate: step 1/1. In terms of biological role, specifically catalyzes the decarboxylation of meso-diaminopimelate (meso-DAP) to L-lysine. This is Diaminopimelate decarboxylase from Buchnera aphidicola subsp. Baizongia pistaciae (strain Bp).